Consider the following 191-residue polypeptide: Molybdenum cofactor guanylyltransferase (191 aa).

Residues 11 to 13 (LCG), Lys-23, Asp-66, and Asp-97 contribute to the GTP site. A Mg(2+)-binding site is contributed by Asp-97.

This sequence belongs to the MobA family. As to quaternary structure, monomer. Mg(2+) serves as cofactor.

The protein resides in the cytoplasm. The enzyme catalyses Mo-molybdopterin + GTP + H(+) = Mo-molybdopterin guanine dinucleotide + diphosphate. Its function is as follows. Transfers a GMP moiety from GTP to Mo-molybdopterin (Mo-MPT) cofactor (Moco or molybdenum cofactor) to form Mo-molybdopterin guanine dinucleotide (Mo-MGD) cofactor. This chain is Molybdenum cofactor guanylyltransferase, found in Campylobacter jejuni subsp. doylei (strain ATCC BAA-1458 / RM4099 / 269.97).